Consider the following 492-residue polypeptide: Protein nucleotidyltransferase YdiU (492 aa).

ATP-binding residues include Gly88, Gly90, Arg91, Lys111, Asp123, Gly124, Arg174, and Arg181. Asp250 acts as the Proton acceptor in catalysis. Residues Asn251 and Asp260 each contribute to the Mg(2+) site. Residue Asp260 participates in ATP binding.

Belongs to the SELO family. Mg(2+) serves as cofactor. Mn(2+) is required as a cofactor.

It carries out the reaction L-seryl-[protein] + ATP = 3-O-(5'-adenylyl)-L-seryl-[protein] + diphosphate. The enzyme catalyses L-threonyl-[protein] + ATP = 3-O-(5'-adenylyl)-L-threonyl-[protein] + diphosphate. The catalysed reaction is L-tyrosyl-[protein] + ATP = O-(5'-adenylyl)-L-tyrosyl-[protein] + diphosphate. It catalyses the reaction L-histidyl-[protein] + UTP = N(tele)-(5'-uridylyl)-L-histidyl-[protein] + diphosphate. It carries out the reaction L-seryl-[protein] + UTP = O-(5'-uridylyl)-L-seryl-[protein] + diphosphate. The enzyme catalyses L-tyrosyl-[protein] + UTP = O-(5'-uridylyl)-L-tyrosyl-[protein] + diphosphate. In terms of biological role, nucleotidyltransferase involved in the post-translational modification of proteins. It can catalyze the addition of adenosine monophosphate (AMP) or uridine monophosphate (UMP) to a protein, resulting in modifications known as AMPylation and UMPylation. This Rhodopseudomonas palustris (strain HaA2) protein is Protein nucleotidyltransferase YdiU.